The primary structure comprises 493 residues: GPI alpha-1,6-mannosyltransferase 2 (493 aa).

Residues 1 to 13 (MWPQDPSRKEVLR) are Cytoplasmic-facing. Residues 14-34 (FAVSCRILTLMLQALFNAIIP) form a helical membrane-spanning segment. Topologically, residues 35 to 77 (DHHAEAFSPPRLAPSGFVDQLVEGLLGGLSHWDAEHFLFIAEH) are lumenal. Residues 78–98 (GYLYEHNFAFFPGFPLALLVG) form a helical membrane-spanning segment. The Cytoplasmic segment spans residues 99–113 (TELLRPLRGLLSLRS). The helical transmembrane segment at 114–134 (CLLISVASLNFLFFMLAAVAL) threads the bilayer. The Lumenal segment spans residues 135 to 136 (HD). A helical transmembrane segment spans residues 137-157 (LGCLVLHCPHQSFYAALLFCL). Residues 158 to 161 (SPAN) are Cytoplasmic-facing. The helical transmembrane segment at 162–182 (VFLAAGYSEALFALLTFSAMG) threads the bilayer. Topologically, residues 183-192 (QLERGRVWTS) are lumenal. Residues 193–213 (VLLFAFATGVRSNGLVSVGFL) form a helical membrane-spanning segment. Residues 214 to 234 (MHSQCQGFFSSLTMLNPLRQL) lie on the Cytoplasmic side of the membrane. A helical membrane pass occupies residues 235–255 (FKLMASLFLSVFTLGLPFALF). The Lumenal portion of the chain corresponds to 256 to 327 (QYYAYTQFCL…KYYELKQVPN (72 aa)). A helical membrane pass occupies residues 328–348 (FLLAAPVAILVAWATWTYVTT). Topologically, residues 349-378 (HPWLCLTLGLQRSKNNKTLEKPDLGFLSPQ) are cytoplasmic. The helical transmembrane segment at 379-399 (VFVYVVHAAVLLLFGGLCMHV) threads the bilayer. Residues 400 to 469 (QVLTRFLGSS…HWKTCSPVTR (70 aa)) lie on the Lumenal side of the membrane. The chain crosses the membrane as a helical span at residues 470–490 (YILGYFLTYWLLGLLLHCNFL). The Cytoplasmic segment spans residues 491-493 (PWT).

The protein belongs to the PIGV family. Not N-glycosylated.

Its subcellular location is the endoplasmic reticulum membrane. It participates in glycolipid biosynthesis; glycosylphosphatidylinositol-anchor biosynthesis. Functionally, alpha-1,6-mannosyltransferase that catalyzes the transfer of the second mannose, via an alpha-1,6 bond, from a dolichol-phosphate-mannose (Dol-P-Man) to the alpha-D-Man-(1-&gt;4)-alpha-D-GlcN-(1-&gt;6)-(1-radyl,2-acyl-sn-glycero-3-phospho)-2-acyl-inositol (also termed H2) intermediate to generate an alpha-D-Man-(1-&gt;6)-alpha-D-Man-(1-&gt;4)-alpha-D-GlcN-(1-&gt;6)-(1-radyl,2-acyl-sn-glycero-3-phospho)-2-acyl-inositol (also termed H3) and participates in the seventh step of the glycosylphosphatidylinositol-anchor biosynthesis. Also transfers the second mannose on a 2-PEtn-alpha-D-Man-(1-&gt;4)-alpha-D-GlcN-(1-&gt;6)-(1-radyl,2-acyl-sn-glycero-3-phospho)-2-acyl-inositol (also termed H5). The polypeptide is GPI alpha-1,6-mannosyltransferase 2 (Homo sapiens (Human)).